The sequence spans 281 residues: Phosphate import ATP-binding protein PstB 1 (281 aa).

Residues 1-34 form a disordered region; it reads MTENTAETADESSDGGVTATTGAATTTPTTPPEP. Residues 15–28 show a composition bias toward low complexity; it reads GGVTATTGAATTTP. The 241-residue stretch at 36-276 folds into the ABC transporter domain; it reads IRARDLDVFY…PEHQRVEEYI (241 aa). Residue 68–75 coordinates ATP; it reads GPSGCGKS.

The protein belongs to the ABC transporter superfamily. Phosphate importer (TC 3.A.1.7) family. In terms of assembly, the complex is composed of two ATP-binding proteins (PstB), two transmembrane proteins (PstC and PstA) and a solute-binding protein (PstS).

Its subcellular location is the cell membrane. It catalyses the reaction phosphate(out) + ATP + H2O = ADP + 2 phosphate(in) + H(+). Its function is as follows. Part of the ABC transporter complex PstSACB involved in phosphate import. Responsible for energy coupling to the transport system. The polypeptide is Phosphate import ATP-binding protein PstB 1 (Halobacterium salinarum (strain ATCC 700922 / JCM 11081 / NRC-1) (Halobacterium halobium)).